A 128-amino-acid polypeptide reads, in one-letter code: Large ribosomal subunit protein bL17 (128 aa).

The protein belongs to the bacterial ribosomal protein bL17 family. In terms of assembly, part of the 50S ribosomal subunit. Contacts protein L32.

The protein is Large ribosomal subunit protein bL17 of Pseudomonas syringae pv. syringae (strain B728a).